The following is a 273-amino-acid chain: SPRY domain-containing SOCS box protein 1 (273 aa).

Y31 carries the post-translational modification Phosphotyrosine; by MET. A B30.2/SPRY domain is found at 33–231 (KPTRLDLLLD…IRMRYLNGLD (199 aa)). Residues 232–273 (PEPLPLMDLCRRSVRLALGRERLGEIHTLPLPASLKAYLLYQ) form the SOCS box domain.

It belongs to the SPSB family. In terms of assembly, component of the probable ECS(SPSB1) E3 ubiquitin-protein ligase complex which contains CUL5, RNF7/RBX2, Elongin BC complex and SPSB1. Interacts with CUL5, RNF7, ELOB and ELOC. Directly interacts with MET tyrosine kinase domain in the presence and in the absence of HGF, however HGF treatment has a positive effect on this interaction. When phosphorylated, interacts with RASA1 without affecting its stability. Interacts (via B30.2/SPRY domain) with PAWR; this interaction is direct and occurs in association with the Elongin BC complex. Interacts with NOS2. Interacts with EPHB2.

The protein resides in the cytoplasm. Its subcellular location is the cytosol. Its pathway is protein modification; protein ubiquitination. Substrate recognition component of a SCF-like ECS (Elongin BC-CUL2/5-SOCS-box protein) E3 ubiquitin-protein ligase complex which mediates the ubiquitination and subsequent proteasomal degradation of target proteins. Negatively regulates nitric oxide (NO) production and limits cellular toxicity in activated macrophages by mediating the ubiquitination and proteasomal degradation of NOS2. Acts as a bridge which links NOS2 with the ECS E3 ubiquitin ligase complex components ELOC and CUL5. This Homo sapiens (Human) protein is SPRY domain-containing SOCS box protein 1 (SPSB1).